The primary structure comprises 266 residues: Transcription factor atoh8 (266 aa).

The segment at 140-164 (AASQAPAGGSERAESPRKRAGEPSG) is disordered. The span at 150–160 (ERAESPRKRAG) shows a compositional bias: basic and acidic residues. Positions 175–188 (TRRLLANARERTRV) are basic motif; degenerate. The bHLH domain occupies 175–227 (TRRLLANARERTRVHTISAAFEALRKQVPCYSYGQKLSKLAILRIACNYILSL). The segment at 189-227 (HTISAAFEALRKQVPCYSYGQKLSKLAILRIACNYILSL) is helix-loop-helix motif.

It is found in the nucleus. Its subcellular location is the nucleus speckle. It localises to the cytoplasm. In terms of biological role, transcription factor that binds a palindromic (canonical) core consensus DNA sequence 5'-CANNTG- 3' known as an E-box element, possibly as a heterodimer with other bHLH proteins. During development, is required for heart looping and swim bladder formation by acting in concert with GATA4 and ZFPM1. During the development of both the retina and skeletal muscles is required for neural retinal cell through modulating PAX6 and NEUROG3 expression and myogenic differentiation. The polypeptide is Transcription factor atoh8 (Danio rerio (Zebrafish)).